Here is a 185-residue protein sequence, read N- to C-terminus: Bcl-2-modifying factor (185 aa).

Residues 1–28 (MEPPQCVEELEDDVFQSEDGEPGTQPGG) are disordered. Residues 8–21 (EELEDDVFQSEDGE) show a composition bias toward acidic residues. The segment at 67 to 75 (DKATQTLSP) is interaction with DLC2. The BH3 signature appears at 134–148 (IARKLQCIADQFHRL).

The protein belongs to the Bcl-2 family. In terms of assembly, interacts with MCL1, BCL2, BCL2L1/BCL-Xl, BCL2A1 and BCL2L2/BCL-w. Interacts with the myosin V actin motor complex through its binding to DLC2. As to expression, widely expressed with an abundant expression in pancreas, liver kidney and hematopoietic tissues.

Functionally, may play a role in apoptosis. This Mus musculus (Mouse) protein is Bcl-2-modifying factor (Bmf).